The following is a 1083-amino-acid chain: Error-prone DNA polymerase (1083 aa).

Belongs to the DNA polymerase type-C family. DnaE2 subfamily.

The protein localises to the cytoplasm. It carries out the reaction DNA(n) + a 2'-deoxyribonucleoside 5'-triphosphate = DNA(n+1) + diphosphate. Its function is as follows. DNA polymerase involved in damage-induced mutagenesis and translesion synthesis (TLS). It is not the major replicative DNA polymerase. In Xanthomonas axonopodis pv. citri (strain 306), this protein is Error-prone DNA polymerase.